Here is a 344-residue protein sequence, read N- to C-terminus: Arginine N-succinyltransferase (344 aa).

A succinyl-CoA-binding site is contributed by leucine 125. Histidine 229 acts as the Proton donor in catalysis.

It belongs to the arginine N-succinyltransferase family.

It carries out the reaction succinyl-CoA + L-arginine = N(2)-succinyl-L-arginine + CoA + H(+). It functions in the pathway amino-acid degradation; L-arginine degradation via AST pathway; L-glutamate and succinate from L-arginine: step 1/5. Functionally, catalyzes the transfer of succinyl-CoA to arginine to produce N(2)-succinylarginine. This chain is Arginine N-succinyltransferase, found in Escherichia fergusonii (strain ATCC 35469 / DSM 13698 / CCUG 18766 / IAM 14443 / JCM 21226 / LMG 7866 / NBRC 102419 / NCTC 12128 / CDC 0568-73).